A 485-amino-acid chain; its full sequence is MAAVWQQVLAVDARYNAYRTPTFPQFRTQYIRRRSQLLRENAKAGHPPALRRQYLRLRGQLLGQRYGPLSEPGSARAYSNSIVRSSRTTLDRMEDFEDDPRALGARGHRRSVSRGSYQLQAQMNRAVYEDRPPGSVVPTSAAEASRAMAGDTSLSENYAFAGMYHVFDQHVDEAVPRVRFANDDRHRLACCSLDGSISLCQLVPAPPTVLRVLRGHTRGVSDFAWSLSNDILVSTSLDATMRIWASEDGRCIREIPDPDSAELLCCTFQPVNNNLTVVGNAKHNVHVMNISTGKKVKGGSSKLTGRVLALSFDAPGRLLWAGDDRGSVFSFLFDMATGKLTKAKRLVVHEGSPVTSISARSWVSREARDPSLLINACLNKLLLYRVVDNEGTLQLKRSFPIEQSSHPVRSIFCPLMSFRQGACVVTGSEDMCVHFFDVERAAKAAVNKLQGHSAPVLDVSFNCDESLLASSDASGMVIVWRREQK.

Methionine 1 is modified (N-acetylmethionine). Serine 70, serine 74, and serine 79 each carry phosphoserine. Asymmetric dimethylarginine; alternate is present on arginine 114. Arginine 114 bears the Omega-N-methylarginine; alternate mark. WD repeat units follow at residues 162–202, 208–246, 250–290, 295–335, 341–389, 394–438, and 444–482; these read GMYH…LCQL, TVLR…IWAS, RCIR…VMNI, KVKG…LFDM, TKAK…VVDN, QLKR…FFDV, and AAVN…VWRR.

As to expression, widely expressed.

The protein resides in the nucleus. The sequence is that of WD repeat-containing protein 13 (WDR13) from Homo sapiens (Human).